The primary structure comprises 307 residues: 4-hydroxythreonine-4-phosphate dehydrogenase (307 aa).

Positions 126 and 127 each coordinate substrate. The a divalent metal cation site is built by H156, H195, and H251. The substrate site is built by K259, N268, and R277.

Belongs to the PdxA family. In terms of assembly, homodimer. Zn(2+) serves as cofactor. It depends on Mg(2+) as a cofactor. The cofactor is Co(2+).

The protein resides in the cytoplasm. It carries out the reaction 4-(phosphooxy)-L-threonine + NAD(+) = 3-amino-2-oxopropyl phosphate + CO2 + NADH. Its pathway is cofactor biosynthesis; pyridoxine 5'-phosphate biosynthesis; pyridoxine 5'-phosphate from D-erythrose 4-phosphate: step 4/5. Functionally, catalyzes the NAD(P)-dependent oxidation of 4-(phosphooxy)-L-threonine (HTP) into 2-amino-3-oxo-4-(phosphooxy)butyric acid which spontaneously decarboxylates to form 3-amino-2-oxopropyl phosphate (AHAP). This Helicobacter pylori (strain ATCC 700392 / 26695) (Campylobacter pylori) protein is 4-hydroxythreonine-4-phosphate dehydrogenase.